A 347-amino-acid polypeptide reads, in one-letter code: Quinolinate synthase (347 aa).

Iminosuccinate is bound by residues H47 and S68. C113 is a [4Fe-4S] cluster binding site. Residues Y139 to N141 and S156 each bind iminosuccinate. C200 contributes to the [4Fe-4S] cluster binding site. Iminosuccinate-binding positions include H226–E228 and T243. C297 is a [4Fe-4S] cluster binding site.

Belongs to the quinolinate synthase family. Type 1 subfamily. [4Fe-4S] cluster is required as a cofactor.

The protein localises to the cytoplasm. The catalysed reaction is iminosuccinate + dihydroxyacetone phosphate = quinolinate + phosphate + 2 H2O + H(+). The protein operates within cofactor biosynthesis; NAD(+) biosynthesis; quinolinate from iminoaspartate: step 1/1. Functionally, catalyzes the condensation of iminoaspartate with dihydroxyacetone phosphate to form quinolinate. The polypeptide is Quinolinate synthase (Salmonella enteritidis PT4 (strain P125109)).